A 231-amino-acid polypeptide reads, in one-letter code: Cutinase 2 (231 aa).

Residues Met1–Ala16 form the signal peptide. A disulfide bridge connects residues Cys48 and Cys126. Ser137 (nucleophile) is an active-site residue. A disulfide bond links Cys188 and Cys195. Asp192 is an active-site residue. The active-site Proton donor/acceptor is His205.

It belongs to the cutinase family. In terms of processing, the 2 disulfide bonds play a critical role in holding the catalytic residues in juxta-position; reduction of the disulfide bridges results in the complete inactivation of the enzyme.

The protein resides in the secreted. It catalyses the reaction cutin + H2O = cutin monomers.. Its function is as follows. Catalyzes the hydrolysis of complex carboxylic polyesters found in the cell wall of plants. Degrades cutin, a macromolecule that forms the structure of the plant cuticle. Allows pathogenic fungi to penetrate through the cuticular barrier into the host plant during the initial stage of fungal infection. The chain is Cutinase 2 (CUT2) from Fusarium vanettenii (Neocosmospora pisi).